The sequence spans 392 residues: Acetyl-CoA acetyltransferase (392 aa).

The active-site Acyl-thioester intermediate is the cysteine 85. CoA contacts are provided by cysteine 206, serine 207, valine 209, and lysine 332. Residue histidine 336 is the Proton acceptor of the active site.

The protein belongs to the thiolase-like superfamily. Thiolase family. Interacts with HMG-CoA synthase (HMGCS) that catalyzes the second step in the pathway and with a DUF35 protein. The acetoacetyl-CoA thiolase/HMG-CoA synthase complex channels the intermediate via a fused CoA-binding site, which allows for efficient coupling of the endergonic thiolase reaction with the exergonic HMGCS reaction.

The enzyme catalyses 2 acetyl-CoA = acetoacetyl-CoA + CoA. Its pathway is metabolic intermediate biosynthesis; (R)-mevalonate biosynthesis; (R)-mevalonate from acetyl-CoA: step 1/3. Functionally, catalyzes the condensation of two acetyl-coA molecules into acetoacetyl-CoA. Functions in the mevalonate (MVA) pathway leading to isopentenyl diphosphate (IPP), a key precursor for the biosynthesis of isoprenoid compounds that are building blocks of archaeal membrane lipids. The sequence is that of Acetyl-CoA acetyltransferase from Methanocaldococcus jannaschii (strain ATCC 43067 / DSM 2661 / JAL-1 / JCM 10045 / NBRC 100440) (Methanococcus jannaschii).